Here is a 308-residue protein sequence, read N- to C-terminus: UDP-N-acetylenolpyruvoylglucosamine reductase (308 aa).

Residues 37 to 201 (RVGGPAQVLF…TQATFRGTPG (165 aa)) enclose the FAD-binding PCMH-type domain. The active site involves arginine 181. Residues 216 to 233 (SREATQPIKSRTGGSTFK) are compositionally biased toward polar residues. Residues 216–236 (SREATQPIKSRTGGSTFKNPP) are disordered. Serine 230 acts as the Proton donor in catalysis. Glutamate 300 is an active-site residue.

Belongs to the MurB family. It depends on FAD as a cofactor.

It localises to the cytoplasm. The catalysed reaction is UDP-N-acetyl-alpha-D-muramate + NADP(+) = UDP-N-acetyl-3-O-(1-carboxyvinyl)-alpha-D-glucosamine + NADPH + H(+). It participates in cell wall biogenesis; peptidoglycan biosynthesis. Its function is as follows. Cell wall formation. The protein is UDP-N-acetylenolpyruvoylglucosamine reductase of Azorhizobium caulinodans (strain ATCC 43989 / DSM 5975 / JCM 20966 / LMG 6465 / NBRC 14845 / NCIMB 13405 / ORS 571).